The following is a 185-amino-acid chain: Ribosome-recycling factor (185 aa).

It belongs to the RRF family.

The protein localises to the cytoplasm. In terms of biological role, responsible for the release of ribosomes from messenger RNA at the termination of protein biosynthesis. May increase the efficiency of translation by recycling ribosomes from one round of translation to another. This chain is Ribosome-recycling factor, found in Salinispora tropica (strain ATCC BAA-916 / DSM 44818 / JCM 13857 / NBRC 105044 / CNB-440).